The primary structure comprises 889 residues: Putative receptor-like protein kinase At3g46340 (889 aa).

Positions 1–25 (MEFPHSVLLVVLIIATFAISNLVQA) are cleaved as a signal peptide. At 26-514 (EEDQEGFISL…VITKKKFPVM (489 aa)) the chain is on the extracellular side. N185, N239, N259, N292, N316, N342, N366, N419, N435, N448, N467, and N474 each carry an N-linked (GlcNAc...) asparagine glycan. LRR repeat units follow at residues 414–437 (RITS…QNLT), 438–460 (HLDK…LASM), and 462–483 (SLSF…ALLK). The helical transmembrane segment at 515–535 (IVALVSSAVVVILVVLVLIFV) threads the bilayer. Over 536–889 (FKKKKPSNLE…FDTKAVPSAR (354 aa)) the chain is Cytoplasmic. The segment at 544 to 566 (LEDLPPSSNTPRENITSTSISDT) is disordered. Positions 585-874 (KNLQRPLGEG…TQGMDSHSSF (290 aa)) constitute a Protein kinase domain. ATP-binding positions include 591–599 (LGEGGFGVV) and K614. At Y659 the chain carries Phosphotyrosine. Catalysis depends on D711, which acts as the Proton acceptor. S745 carries the phosphoserine modification. T746 and T751 each carry phosphothreonine. Y759 carries the phosphotyrosine modification. Residues 863–889 (NKTQGMDSHSSFEQSMSFDTKAVPSAR) form a disordered region. The segment covering 864–880 (KTQGMDSHSSFEQSMSF) has biased composition (polar residues).

The protein belongs to the protein kinase superfamily. Ser/Thr protein kinase family.

It is found in the cell membrane. The catalysed reaction is L-seryl-[protein] + ATP = O-phospho-L-seryl-[protein] + ADP + H(+). The enzyme catalyses L-threonyl-[protein] + ATP = O-phospho-L-threonyl-[protein] + ADP + H(+). In Arabidopsis thaliana (Mouse-ear cress), this protein is Putative receptor-like protein kinase At3g46340.